The primary structure comprises 159 residues: Cytochrome c-type biogenesis protein CcmE (159 aa).

Over 1 to 7 (MTRKGRR) the chain is Cytoplasmic. Residues 8–28 (LVLIGAGLGVLALAAGLILSA) form a helical; Signal-anchor for type II membrane protein membrane-spanning segment. The Periplasmic segment spans residues 29 to 159 (LNDTIVFFRS…AAPVQRAPGS (131 aa)). Positions 121 and 125 each coordinate heme. The interval 134–159 (LKKQGRWQEGGPAPGTAAPVQRAPGS) is disordered.

The protein belongs to the CcmE/CycJ family.

Its subcellular location is the cell inner membrane. Functionally, heme chaperone required for the biogenesis of c-type cytochromes. Transiently binds heme delivered by CcmC and transfers the heme to apo-cytochromes in a process facilitated by CcmF and CcmH. This Xanthobacter autotrophicus (strain ATCC BAA-1158 / Py2) protein is Cytochrome c-type biogenesis protein CcmE.